We begin with the raw amino-acid sequence, 176 residues long: MAKKRSKNEIDWTDEEEEIIWVSKSEIKRDSEHLKKLGAELIELTPQNLEKIPLDDDLKDAIRQAQSFKLEARRRQIQFIGKLLRNRDPEPIQEALDKVKNRHNQQQALLHKLELVRDQLVNMGDSSLEHLLTEHPQLDRQHLRNLIRGAQKEREANKPPKNYREIFQYLKTEIAE.

Belongs to the DarP family.

The protein localises to the cytoplasm. In terms of biological role, member of a network of 50S ribosomal subunit biogenesis factors which assembles along the 30S-50S interface, preventing incorrect 23S rRNA structures from forming. Promotes peptidyl transferase center (PTC) maturation. This chain is Dual-action ribosomal maturation protein DarP, found in Actinobacillus pleuropneumoniae serotype 5b (strain L20).